Here is a 257-residue protein sequence, read N- to C-terminus: Tryptophan synthase alpha chain (257 aa).

Catalysis depends on proton acceptor residues Glu-51 and Asp-62.

This sequence belongs to the TrpA family. Tetramer of two alpha and two beta chains.

It catalyses the reaction (1S,2R)-1-C-(indol-3-yl)glycerol 3-phosphate + L-serine = D-glyceraldehyde 3-phosphate + L-tryptophan + H2O. It participates in amino-acid biosynthesis; L-tryptophan biosynthesis; L-tryptophan from chorismate: step 5/5. The alpha subunit is responsible for the aldol cleavage of indoleglycerol phosphate to indole and glyceraldehyde 3-phosphate. This Nitratidesulfovibrio vulgaris (strain ATCC 29579 / DSM 644 / CCUG 34227 / NCIMB 8303 / VKM B-1760 / Hildenborough) (Desulfovibrio vulgaris) protein is Tryptophan synthase alpha chain.